We begin with the raw amino-acid sequence, 244 residues long: tRNA (guanine-N(7)-)-methyltransferase (244 aa).

Residues 1–24 (MTDSHVPHPESPAVEEGEERPHRR) form a disordered region. Residues glutamate 74, glutamate 99, aspartate 126, and aspartate 149 each contribute to the S-adenosyl-L-methionine site. Residue aspartate 149 is part of the active site. Substrate-binding positions include lysine 153, aspartate 185, and 222-225 (TKFE).

Belongs to the class I-like SAM-binding methyltransferase superfamily. TrmB family.

It catalyses the reaction guanosine(46) in tRNA + S-adenosyl-L-methionine = N(7)-methylguanosine(46) in tRNA + S-adenosyl-L-homocysteine. It functions in the pathway tRNA modification; N(7)-methylguanine-tRNA biosynthesis. Its function is as follows. Catalyzes the formation of N(7)-methylguanine at position 46 (m7G46) in tRNA. The polypeptide is tRNA (guanine-N(7)-)-methyltransferase (Pseudomonas syringae pv. syringae (strain B728a)).